Consider the following 951-residue polypeptide: Multiple C2 and transmembrane domain-containing protein 1 (951 aa).

Disordered stretches follow at residues 29 to 79, 92 to 117, 129 to 198, and 210 to 231; these read LGVG…RWSG, SSSQ…AEQG, LPVA…QKSS, and LEPA…ALQK. Residues 31–43 are compositionally biased toward gly residues; the sequence is VGKGKGGGGGRAG. Residues 147–168 show a composition bias toward low complexity; sequence PGGRSPDSAPSSSSASSSLSSS. Residues 174 to 184 show a composition bias toward basic and acidic residues; sequence RGDRVRDESTR. The segment covering 219–228 has biased composition (low complexity); it reads PARGPAEPQA. 3 consecutive C2 domains span residues 240–358, 404–521, and 555–676; these read KIST…DVTL, QTQS…KLEL, and QKER…AYVL. The Ca(2+) site is built by Asp-275, Asp-281, Asp-328, Asp-330, Asp-336, Asp-438, Asp-444, Asp-491, Asp-493, Asp-499, Asp-594, Asp-600, Asp-646, Asp-648, and Asp-654. A run of 2 helical transmembrane segments spans residues 763–783 and 866–886; these read FVLF…LLLL and PFLS…LYFI.

It belongs to the MCTP family. Requires Ca(2+) as cofactor.

The protein resides in the cytoplasmic vesicle. The protein localises to the secretory vesicle. Its subcellular location is the synaptic vesicle membrane. It localises to the recycling endosome. It is found in the endoplasmic reticulum membrane. In terms of biological role, calcium sensor which is essential for the stabilization of normal baseline neurotransmitter release and for the induction and long-term maintenance of presynaptic homeostatic plasticity. This is Multiple C2 and transmembrane domain-containing protein 1 from Mus musculus (Mouse).